The primary structure comprises 493 residues: Alpha-amylase-related protein (493 aa).

The N-terminal stretch at 1-19 is a signal peptide; it reads MFKLAFTLTLCLAGSLSLA. Q20 carries the post-translational modification Pyrrolidone carboxylic acid. C47 and C103 are oxidised to a cystine. N117, Q168, and D177 together coordinate Ca(2+). C156 and C170 are joined by a disulfide. Residue R205 coordinates chloride. D207 acts as the Nucleophile in catalysis. Residue H211 coordinates Ca(2+). E244 serves as the catalytic Proton donor. The chloride site is built by N307 and R342. Intrachain disulfides connect C375–C381, C417–C440, and C447–C459.

It belongs to the glycosyl hydrolase 13 family. Monomer. It depends on Ca(2+) as a cofactor. Requires chloride as cofactor.

The protein localises to the secreted. The catalysed reaction is Endohydrolysis of (1-&gt;4)-alpha-D-glucosidic linkages in polysaccharides containing three or more (1-&gt;4)-alpha-linked D-glucose units.. This Drosophila orena (Fruit fly) protein is Alpha-amylase-related protein (Amyrel).